The sequence spans 485 residues: Calcium-dependent protein kinase 27 (485 aa).

Gly2 is lipidated: N-myristoyl glycine. The Protein kinase domain occupies 28 to 290 (YILGEELGRG…AAEVLGHPWM (263 aa)). ATP-binding positions include 34-42 (LGRGNFGLT) and Lys57. Residue Asp156 is the Proton acceptor of the active site. Ser196 is modified (phosphoserine). Residues 295-325 (ASDKPIDGVVLSRLKRFRDANKFKKVVLKFI) are autoinhibitory domain. 4 EF-hand domains span residues 332 to 367 (EEIK…LGSN), 368 to 403 (LSKT…RYKL), 404 to 439 (DRDE…DGAG), and 444 to 474 (IKQI…ESSL). Residues Asp345, Asp347, Ser349, Asn351, Glu356, Asp381, Asp383, Asn385, Thr387, Glu392, Asp417, Asp419, Asp421, His423, Glu428, Asp452, Asp454, Asp456, Lys458, and Glu463 each contribute to the Ca(2+) site.

The protein belongs to the protein kinase superfamily. Ser/Thr protein kinase family. CDPK subfamily.

The protein localises to the membrane. The enzyme catalyses L-seryl-[protein] + ATP = O-phospho-L-seryl-[protein] + ADP + H(+). The catalysed reaction is L-threonyl-[protein] + ATP = O-phospho-L-threonyl-[protein] + ADP + H(+). With respect to regulation, activated by calcium. Autophosphorylation may play an important role in the regulation of the kinase activity. Its function is as follows. May play a role in signal transduction pathways that involve calcium as a second messenger. This Arabidopsis thaliana (Mouse-ear cress) protein is Calcium-dependent protein kinase 27 (CPK27).